Reading from the N-terminus, the 298-residue chain is MDYFFKSPIDVDLHLDNEEERTFVDYEFEQGRKDKAPIYESDETVKGTVMIRLKDGRKLDHDGVKIEFIGQIENTYDKGNIHEFTRSVQELASPGEMRHAQMFEFEFKHVDKPYESYIGKNVKLRYICRVTVSRKMKDVIREKDLWVYRFENEPETNSLIRMDVGIDECLHIEFEYSKNKYHLKDVIIGKIYFILVRIKVQRMEVSIIRRETIGTSPNQYSNSETITRFQIMDGNPNRGETIPLRMFLNGYALTPTFRDVNKKFSVRYYLSLILVDEDQRRYFKQSEITLWRRRDEHE.

It belongs to the VPS26 family. In terms of assembly, component of the retromer complex which consists of vps29, vps6, vps35, vps5 and vps17. Component of a retromer subcomplex consisting of vps29, vps26 and vps35.

In terms of biological role, plays a role in vesicular protein sorting. Required for the endosome-to-Golgi retrieval of the vacuolar protein sorting receptor pep1/vps10. Component of the membrane-associated retromer complex which is essential in endosome-to-Golgi retrograde transport. The vps29-vps26-vps35 subcomplex may be involved in cargo selection. The polypeptide is Vacuolar protein sorting-associated protein 26 (vps26) (Schizosaccharomyces pombe (strain 972 / ATCC 24843) (Fission yeast)).